The sequence spans 153 residues: Ribosome maturation factor RimP (153 aa).

The protein belongs to the RimP family.

Its subcellular location is the cytoplasm. In terms of biological role, required for maturation of 30S ribosomal subunits. This is Ribosome maturation factor RimP from Glaesserella parasuis serovar 5 (strain SH0165) (Haemophilus parasuis).